The following is a 313-amino-acid chain: Porphobilinogen deaminase (313 aa).

C243 carries the S-(dipyrrolylmethanemethyl)cysteine modification.

The protein belongs to the HMBS family. As to quaternary structure, monomer. Dipyrromethane serves as cofactor.

It catalyses the reaction 4 porphobilinogen + H2O = hydroxymethylbilane + 4 NH4(+). Its pathway is porphyrin-containing compound metabolism; protoporphyrin-IX biosynthesis; coproporphyrinogen-III from 5-aminolevulinate: step 2/4. Functionally, tetrapolymerization of the monopyrrole PBG into the hydroxymethylbilane pre-uroporphyrinogen in several discrete steps. This is Porphobilinogen deaminase from Bordetella petrii (strain ATCC BAA-461 / DSM 12804 / CCUG 43448).